The chain runs to 408 residues: tRNA-specific 2-thiouridylase MnmA (408 aa).

ATP is bound by residues 27–34 and L53; that span reads AMSGGVDS. The Nucleophile role is filled by C121. Cysteines 121 and 222 form a disulfide. ATP is bound at residue G145. The interaction with tRNA stretch occupies residues 172 to 174; it reads RDQ. The active-site Cysteine persulfide intermediate is C222.

Belongs to the MnmA/TRMU family.

Its subcellular location is the cytoplasm. It catalyses the reaction S-sulfanyl-L-cysteinyl-[protein] + uridine(34) in tRNA + AH2 + ATP = 2-thiouridine(34) in tRNA + L-cysteinyl-[protein] + A + AMP + diphosphate + H(+). Catalyzes the 2-thiolation of uridine at the wobble position (U34) of tRNA, leading to the formation of s(2)U34. This chain is tRNA-specific 2-thiouridylase MnmA, found in Rhizobium johnstonii (strain DSM 114642 / LMG 32736 / 3841) (Rhizobium leguminosarum bv. viciae).